We begin with the raw amino-acid sequence, 56 residues long: Small ribosomal subunit protein uS14 (56 aa).

Residues Cys-21, Cys-24, Cys-39, and Cys-42 each contribute to the Zn(2+) site.

Belongs to the universal ribosomal protein uS14 family. Component of the small ribosomal subunit. Mature ribosomes consist of a small (40S) and a large (60S) subunit. The 40S subunit contains about 32 different proteins and 1 molecule of RNA (18S). The 60S subunit contains 45 different proteins and 3 molecules of RNA (25S, 5.8S and 5S). Zn(2+) serves as cofactor.

It localises to the cytoplasm. In terms of biological role, component of the ribosome, a large ribonucleoprotein complex responsible for the synthesis of proteins in the cell. The small ribosomal subunit (SSU) binds messenger RNAs (mRNAs) and translates the encoded message by selecting cognate aminoacyl-transfer RNA (tRNA) molecules. The large subunit (LSU) contains the ribosomal catalytic site termed the peptidyl transferase center (PTC), which catalyzes the formation of peptide bonds, thereby polymerizing the amino acids delivered by tRNAs into a polypeptide chain. The nascent polypeptides leave the ribosome through a tunnel in the LSU and interact with protein factors that function in enzymatic processing, targeting, and the membrane insertion of nascent chains at the exit of the ribosomal tunnel. In Candida albicans (strain SC5314 / ATCC MYA-2876) (Yeast), this protein is Small ribosomal subunit protein uS14.